The chain runs to 504 residues: Maturase K (504 aa).

The protein belongs to the intron maturase 2 family. MatK subfamily.

The protein localises to the plastid. The protein resides in the chloroplast. Functionally, usually encoded in the trnK tRNA gene intron. Probably assists in splicing its own and other chloroplast group II introns. The sequence is that of Maturase K from Gossypium barbadense (Sea Island cotton).